A 143-amino-acid chain; its full sequence is Peptide methionine sulfoxide reductase MsrB (143 aa).

The region spanning 16–139 (DAELRRRLTP…NSAALNFESR (124 aa)) is the MsrB domain. C55, C58, C104, and C107 together coordinate Zn(2+). Residue C128 is the Nucleophile of the active site.

This sequence belongs to the MsrB Met sulfoxide reductase family. Zn(2+) serves as cofactor.

The catalysed reaction is L-methionyl-[protein] + [thioredoxin]-disulfide + H2O = L-methionyl-(R)-S-oxide-[protein] + [thioredoxin]-dithiol. The protein is Peptide methionine sulfoxide reductase MsrB of Burkholderia cenocepacia (strain ATCC BAA-245 / DSM 16553 / LMG 16656 / NCTC 13227 / J2315 / CF5610) (Burkholderia cepacia (strain J2315)).